The primary structure comprises 280 residues: uncharacterized protein (280 aa).

The protein belongs to the eukaryotic-type primase small subunit family.

This is an uncharacterized protein from Archaeoglobus fulgidus (strain ATCC 49558 / DSM 4304 / JCM 9628 / NBRC 100126 / VC-16).